The primary structure comprises 38 residues: Histatin-1 (38 aa).

Residues 1–38 form a disordered region; that stretch reads DSHEERHHGRHGHHKYGRKFHEKHHSHRGYRSNYLYDN. Phosphoserine is present on Ser-2. Residues 8–30 show a composition bias toward basic residues; the sequence is HGRHGHHKYGRKFHEKHHSHRGY.

Belongs to the histatin/statherin family.

Its subcellular location is the secreted. Histatins (Hsts) are cationic and histidine-rich secreted peptides mainly synthesized by saliva glands of humans and higher primates. Hsts are considered to be major precursors of the protective proteinaceous structure on tooth surfaces (enamel pellicle). The chain is Histatin-1 (HTN1) from Macaca fascicularis (Crab-eating macaque).